A 161-amino-acid chain; its full sequence is Putative 4-hydroxy-4-methyl-2-oxoglutarate aldolase (161 aa).

Residues 77-80 (GGNL) and Arg99 each bind substrate. Asp100 serves as a coordination point for a divalent metal cation.

It belongs to the class II aldolase/RraA-like family. In terms of assembly, homotrimer. A divalent metal cation is required as a cofactor.

It catalyses the reaction 4-hydroxy-4-methyl-2-oxoglutarate = 2 pyruvate. The enzyme catalyses oxaloacetate + H(+) = pyruvate + CO2. In terms of biological role, catalyzes the aldol cleavage of 4-hydroxy-4-methyl-2-oxoglutarate (HMG) into 2 molecules of pyruvate. Also contains a secondary oxaloacetate (OAA) decarboxylase activity due to the common pyruvate enolate transition state formed following C-C bond cleavage in the retro-aldol and decarboxylation reactions. This Methylococcus capsulatus (strain ATCC 33009 / NCIMB 11132 / Bath) protein is Putative 4-hydroxy-4-methyl-2-oxoglutarate aldolase.